The primary structure comprises 579 residues: Zinc finger protein 384 (579 aa).

The interval 171–198 is disordered; that stretch reads TLTEEGGGGGGGGGTVAPPKPPRGRKKK. The span at 175 to 185 shows a compositional bias: gly residues; the sequence is EGGGGGGGGGT. C2H2-type zinc fingers lie at residues 229–251, 257–279, 285–307, 318–340, 346–368, 374–398, 404–426, and 434–456; these read YRCR…SKSH, HKCP…IRIH, YSCN…TRIH, HKCP…LRIH, YNCS…TRIH, YKCA…RRQH, FKCH…LSTH, and YTCT…MRKH. The segment covering 500–513 has biased composition (low complexity); the sequence is QAQASQASQQQQQQ. The segment at 500–553 is disordered; the sequence is QAQASQASQQQQQQQPPPPQPPHFQSPGAAPQGGGGGDSNQNPPPQCSFDLTPY. A compositionally biased stretch (pro residues) spans 514–523; that stretch reads QPPPPQPPHF.

It belongs to the krueppel C2H2-type zinc-finger protein family. In terms of assembly, interacts with BCAR1. As to expression, expressed in osteocytes, osteoblasts, and chondrocytes in bone.

The protein localises to the nucleus. Functionally, transcription factor that binds the consensus DNA sequence [GC]AAAAA. Seems to bind and regulate the promoters of MMP1, MMP3, MMP7 and COL1A1. The protein is Zinc finger protein 384 (Znf384) of Rattus norvegicus (Rat).